A 354-amino-acid chain; its full sequence is uncharacterized protein (354 aa).

The protein belongs to the asfivirus B354L family.

This is an uncharacterized protein from Ornithodoros (relapsing fever ticks).